A 272-amino-acid chain; its full sequence is Elongation factor Ts (272 aa).

The interval 76 to 79 (TDFV) is involved in Mg(2+) ion dislocation from EF-Tu.

It belongs to the EF-Ts family.

The protein resides in the cytoplasm. In terms of biological role, associates with the EF-Tu.GDP complex and induces the exchange of GDP to GTP. It remains bound to the aminoacyl-tRNA.EF-Tu.GTP complex up to the GTP hydrolysis stage on the ribosome. This Corynebacterium urealyticum (strain ATCC 43042 / DSM 7109) protein is Elongation factor Ts.